The sequence spans 160 residues: Transcription elongation factor GreA (160 aa).

A coiled-coil region spans residues 1–72 (MAEKTYVMTL…QIQILETKIR (72 aa)).

The protein belongs to the GreA/GreB family.

Necessary for efficient RNA polymerase transcription elongation past template-encoded arresting sites. The arresting sites in DNA have the property of trapping a certain fraction of elongating RNA polymerases that pass through, resulting in locked ternary complexes. Cleavage of the nascent transcript by cleavage factors such as GreA or GreB allows the resumption of elongation from the new 3'terminus. GreA releases sequences of 2 to 3 nucleotides. The protein is Transcription elongation factor GreA of Streptococcus thermophilus (strain ATCC BAA-491 / LMD-9).